Reading from the N-terminus, the 154-residue chain is Ribonuclease H (154 aa).

One can recognise an RNase H type-1 domain in the interval Met-1–Asn-142. Mg(2+) contacts are provided by Asp-10, Glu-48, Asp-70, and Asp-134.

Belongs to the RNase H family. Monomer. It depends on Mg(2+) as a cofactor.

Its subcellular location is the cytoplasm. The catalysed reaction is Endonucleolytic cleavage to 5'-phosphomonoester.. Functionally, endonuclease that specifically degrades the RNA of RNA-DNA hybrids. The sequence is that of Ribonuclease H from Yersinia enterocolitica serotype O:8 / biotype 1B (strain NCTC 13174 / 8081).